The primary structure comprises 410 residues: ORC1-type DNA replication protein 2 (410 aa).

Residues 60–65 (GIGKTT), Tyr213, and Arg225 each bind ATP.

It belongs to the CDC6/cdc18 family.

In terms of biological role, involved in regulation of DNA replication. Binds DNA. The sequence is that of ORC1-type DNA replication protein 2 (orc2) from Aeropyrum pernix (strain ATCC 700893 / DSM 11879 / JCM 9820 / NBRC 100138 / K1).